Here is a 270-residue protein sequence, read N- to C-terminus: Phosphate import ATP-binding protein PstB 2 (270 aa).

An ABC transporter domain is found at 25-265; it reads LQAKDINIYY…PEKKQTEDYI (241 aa). 57 to 64 contacts ATP; sequence GPSGCGKS.

It belongs to the ABC transporter superfamily. Phosphate importer (TC 3.A.1.7) family. In terms of assembly, the complex is composed of two ATP-binding proteins (PstB), two transmembrane proteins (PstC and PstA) and a solute-binding protein (PstS).

Its subcellular location is the cell membrane. The enzyme catalyses phosphate(out) + ATP + H2O = ADP + 2 phosphate(in) + H(+). In terms of biological role, part of the ABC transporter complex PstSACB involved in phosphate import. Responsible for energy coupling to the transport system. The sequence is that of Phosphate import ATP-binding protein PstB 2 from Shouchella clausii (strain KSM-K16) (Alkalihalobacillus clausii).